We begin with the raw amino-acid sequence, 464 residues long: Argininosuccinate lyase (464 aa).

It belongs to the lyase 1 family. Argininosuccinate lyase subfamily.

Its subcellular location is the cytoplasm. The catalysed reaction is 2-(N(omega)-L-arginino)succinate = fumarate + L-arginine. It participates in amino-acid biosynthesis; L-arginine biosynthesis; L-arginine from L-ornithine and carbamoyl phosphate: step 3/3. This chain is Argininosuccinate lyase, found in Pseudomonas fluorescens (strain SBW25).